The chain runs to 257 residues: 5-oxoprolinase subunit A (257 aa).

Belongs to the LamB/PxpA family. As to quaternary structure, forms a complex composed of PxpA, PxpB and PxpC.

The catalysed reaction is 5-oxo-L-proline + ATP + 2 H2O = L-glutamate + ADP + phosphate + H(+). Catalyzes the cleavage of 5-oxoproline to form L-glutamate coupled to the hydrolysis of ATP to ADP and inorganic phosphate. This is 5-oxoprolinase subunit A from Natranaerobius thermophilus (strain ATCC BAA-1301 / DSM 18059 / JW/NM-WN-LF).